The primary structure comprises 1302 residues: Multidrug resistance protein 1 (1302 aa).

The helical transmembrane segment at 43–63 threads the bilayer; sequence GVFEIILLIIGIIGSIGVGCL. Residues 51-360 enclose the ABC transmembrane type-1 1 domain; it reads IIGIIGSIGV…ISTPINILNS (310 aa). Asn83 carries N-linked (GlcNAc...) asparagine glycosylation. Helical transmembrane passes span 118–138, 192–212, 213–233, 292–312, and 331–351; these read LYFAIGNMVAGFLQTICFFVL, LFQTFSSFITGYLIGFIKCWD, LTLVVLCMFPFIMVSMMGLGM, IGIGTGLGCMMFFIMSSNALG, and AGTVLTVFMSVLLATQSLSQI. An ABC transporter 1 domain is found at 395–634; that stretch reads IRFEDVQFVY…KGTYYGLVKR (240 aa). 430-437 serves as a coordination point for ATP; that stretch reads GASGCGKS. N-linked (GlcNAc...) asparagine glycosylation occurs at Asn663. The chain crosses the membrane as a helical span at residues 712 to 732; it reads YIFCTLGLIGGIGAGAAFPFY. The region spanning 713-1022 is the ABC transmembrane type-1 2 domain; sequence IFCTLGLIGG…IGNVLPDVGK (310 aa). Residue Asn751 is glycosylated (N-linked (GlcNAc...) asparagine). The chain crosses the membrane as a helical span at residues 765 to 785; sequence MIIICIGIITMISFFCYVGLF. A glycan (N-linked (GlcNAc...) asparagine) is linked at Asn808. Helical transmembrane passes span 841-861 and 862-882; these read VGDIIEIMSTVGFGFGIGLYF and SWKLSLCILAVFPIISFFMFI. The ABC transporter 2 domain occupies 1057–1296; the sequence is IEFKNIHFRY…KGFYYTLAMQ (240 aa). 1092–1099 serves as a coordination point for ATP; it reads GASGCGKS.

Belongs to the ABC transporter superfamily. ABCB family. Multidrug resistance exporter (TC 3.A.1.201) subfamily.

Its subcellular location is the membrane. The enzyme catalyses ATP + H2O + xenobioticSide 1 = ADP + phosphate + xenobioticSide 2.. Energy-dependent efflux pump responsible for decreased drug accumulation in multidrug resistance parasites. This Entamoeba histolytica (strain ATCC 30459 / HM-1:IMSS / ABRM) protein is Multidrug resistance protein 1.